The following is a 393-amino-acid chain: NAD(P)H-quinone oxidoreductase subunit H, chloroplastic (393 aa).

This sequence belongs to the complex I 49 kDa subunit family. As to quaternary structure, NDH is composed of at least 16 different subunits, 5 of which are encoded in the nucleus. Interacts with the chaperonin CNP60B4 subunit.

It localises to the plastid. Its subcellular location is the chloroplast thylakoid membrane. It catalyses the reaction a plastoquinone + NADH + (n+1) H(+)(in) = a plastoquinol + NAD(+) + n H(+)(out). The enzyme catalyses a plastoquinone + NADPH + (n+1) H(+)(in) = a plastoquinol + NADP(+) + n H(+)(out). NDH shuttles electrons from NAD(P)H:plastoquinone, via FMN and iron-sulfur (Fe-S) centers, to quinones in the photosynthetic chain and possibly in a chloroplast respiratory chain. The immediate electron acceptor for the enzyme in this species is believed to be plastoquinone. Couples the redox reaction to proton translocation, and thus conserves the redox energy in a proton gradient. This is NAD(P)H-quinone oxidoreductase subunit H, chloroplastic from Arabidopsis thaliana (Mouse-ear cress).